Here is a 182-residue protein sequence, read N- to C-terminus: Heat shock protein beta-2 (182 aa).

Residues 55 to 163 enclose the sHSP domain; it reads RAGEGGRAGA…DTEVNEVYIS (109 aa).

The protein belongs to the small heat shock protein (HSP20) family. As to quaternary structure, interacts with DMPK; may enhance its kinase activity.

The protein resides in the cytoplasm. The protein localises to the nucleus. Its function is as follows. May regulate the kinase DMPK. This is Heat shock protein beta-2 (Hspb2) from Rattus norvegicus (Rat).